The sequence spans 839 residues: Taste receptor type 1 member 2 (839 aa).

The first 19 residues, 1–19 (MRPRATTICSLFFLLRVLA), serve as a signal peptide directing secretion. Residues 20–566 (EPAKNSDFYL…AFLEWHEAPT (547 aa)) are Extracellular-facing. Asparagine 84, asparagine 127, asparagine 248, asparagine 292, asparagine 312, asparagine 368, asparagine 428, asparagine 487, and asparagine 527 each carry an N-linked (GlcNAc...) asparagine glycan. The chain crosses the membrane as a helical span at residues 567 to 587 (IVVALLAALGFLSTLAILVIF). Residues 588 to 602 (WRHFQTPMVRSAGGP) are Cytoplasmic-facing. Residues 603–623 (MCFLMLTLLLVAYMVVPVYVG) form a helical membrane-spanning segment. The Extracellular segment spans residues 624–635 (PPKVSTCFCRQA). Residues 636-656 (LFPLCFTICISCIAVRSFQIV) traverse the membrane as a helical segment. At 657–681 (CVFKMASRFPRAYSYWVRYQGPYVS) the chain is on the cytoplasmic side. The chain crosses the membrane as a helical span at residues 682–702 (MAFITVLKMVTVVIGMLATGL). Residues 703 to 727 (NPTTRIDPDDPKIMIVSCNPNYRNS) are Extracellular-facing. The helical transmembrane segment at 728-748 (LFFNTGLDLLLSVVGFSFAYM) threads the bilayer. The Cytoplasmic segment spans residues 749-760 (GKELPTNYNEAK). Residues 761-781 (FITLSMTFYFTSSVSLCTFMS) form a helical membrane-spanning segment. The Extracellular portion of the chain corresponds to 782-784 (AYN). A helical membrane pass occupies residues 785-805 (GVLVTIMDLLVTVLNLLAISL). Over 806–839 (GYFGPKCYMILFYPERNTPAYFNSMIQGYTMRRD) the chain is Cytoplasmic.

Belongs to the G-protein coupled receptor 3 family. TAS1R subfamily. Forms heterodimers with TAS1R3.

Its subcellular location is the cell membrane. Functionally, putative taste receptor. TAS1R2/TAS1R3 recognizes diverse natural and synthetic sweeteners. This Macaca mulatta (Rhesus macaque) protein is Taste receptor type 1 member 2 (TAS1R2).